The primary structure comprises 112 residues: Large ribosomal subunit protein uL22 (112 aa).

The protein belongs to the universal ribosomal protein uL22 family. In terms of assembly, part of the 50S ribosomal subunit.

Its function is as follows. This protein binds specifically to 23S rRNA; its binding is stimulated by other ribosomal proteins, e.g. L4, L17, and L20. It is important during the early stages of 50S assembly. It makes multiple contacts with different domains of the 23S rRNA in the assembled 50S subunit and ribosome. The globular domain of the protein is located near the polypeptide exit tunnel on the outside of the subunit, while an extended beta-hairpin is found that lines the wall of the exit tunnel in the center of the 70S ribosome. This is Large ribosomal subunit protein uL22 from Legionella pneumophila subsp. pneumophila (strain Philadelphia 1 / ATCC 33152 / DSM 7513).